The sequence spans 142 residues: Regulator of ribonuclease activity B (142 aa).

Residues 117–142 (PNADEDEYGEDGEFFDDEFADDDEKR) are disordered.

The protein belongs to the RraB family. In terms of assembly, interacts with the C-terminal region of Rne.

The protein localises to the cytoplasm. Its function is as follows. Globally modulates RNA abundance by binding to RNase E (Rne) and regulating its endonucleolytic activity. Can modulate Rne action in a substrate-dependent manner by altering the composition of the degradosome. This Actinobacillus succinogenes (strain ATCC 55618 / DSM 22257 / CCUG 43843 / 130Z) protein is Regulator of ribonuclease activity B.